A 236-amino-acid chain; its full sequence is tRNA (guanine-N(7)-)-methyltransferase (236 aa).

A disordered region spans residues 1–23; it reads MEADVQRAQQAQLEKGSSVPPWT. Positions 69, 94, 121, and 144 each coordinate S-adenosyl-L-methionine. Residue Asp144 is part of the active site. Residues Lys148 and Asp180 each coordinate substrate.

It belongs to the class I-like SAM-binding methyltransferase superfamily. TrmB family.

It catalyses the reaction guanosine(46) in tRNA + S-adenosyl-L-methionine = N(7)-methylguanosine(46) in tRNA + S-adenosyl-L-homocysteine. The protein operates within tRNA modification; N(7)-methylguanine-tRNA biosynthesis. In terms of biological role, catalyzes the formation of N(7)-methylguanine at position 46 (m7G46) in tRNA. In Synechococcus sp. (strain JA-3-3Ab) (Cyanobacteria bacterium Yellowstone A-Prime), this protein is tRNA (guanine-N(7)-)-methyltransferase.